The chain runs to 179 residues: Large ribosomal subunit protein uL15 (179 aa).

Belongs to the universal ribosomal protein uL15 family. As to quaternary structure, part of the 50S ribosomal subunit.

Functionally, binds to the 23S rRNA. This chain is Large ribosomal subunit protein uL15, found in Archaeoglobus fulgidus (strain ATCC 49558 / DSM 4304 / JCM 9628 / NBRC 100126 / VC-16).